Here is a 464-residue protein sequence, read N- to C-terminus: NADH dehydrogenase [ubiquinone] flavoprotein 1, mitochondrial (464 aa).

Residues methionine 1–phenylalanine 20 constitute a mitochondrion transit peptide. Lysine 81 is subject to N6-acetyllysine; alternate. N6-succinyllysine; alternate is present on lysine 81. Glycine 87–glycine 96 contributes to the NADH binding site. An N6-acetyllysine modification is found at lysine 104. Residue arginine 199–threonine 247 coordinates FMN. Arginine 257 bears the Omega-N-methylarginine mark. Lysine 375 is subject to N6-acetyllysine. Positions 379, 382, 385, and 425 each coordinate [4Fe-4S] cluster.

This sequence belongs to the complex I 51 kDa subunit family. As to quaternary structure, core subunit of respiratory chain NADH dehydrogenase (Complex I) which is composed of 45 different subunits. This is a component of the flavoprotein-sulfur (FP) fragment of the enzyme. Interacts with RAB5IF. FMN is required as a cofactor. It depends on [4Fe-4S] cluster as a cofactor.

The protein resides in the mitochondrion inner membrane. The catalysed reaction is a ubiquinone + NADH + 5 H(+)(in) = a ubiquinol + NAD(+) + 4 H(+)(out). Functionally, core subunit of the mitochondrial membrane respiratory chain NADH dehydrogenase (Complex I) which catalyzes electron transfer from NADH through the respiratory chain, using ubiquinone as an electron acceptor. Part of the peripheral arm of the enzyme, where the electrons from NADH are accepted by flavin mononucleotide (FMN) and then passed along a chain of iron-sulfur clusters by electron tunnelling to the final acceptor ubiquinone. Contains FMN, which is the initial electron acceptor as well as one iron-sulfur cluster. This chain is NADH dehydrogenase [ubiquinone] flavoprotein 1, mitochondrial, found in Mus musculus (Mouse).